The sequence spans 185 residues: Large ribosomal subunit protein uL5 (185 aa).

The protein belongs to the universal ribosomal protein uL5 family. As to quaternary structure, part of the 50S ribosomal subunit; part of the 5S rRNA/L5/L18/L25 subcomplex. Contacts the 5S rRNA and the P site tRNA. Forms a bridge to the 30S subunit in the 70S ribosome.

This is one of the proteins that bind and probably mediate the attachment of the 5S RNA into the large ribosomal subunit, where it forms part of the central protuberance. In the 70S ribosome it contacts protein S13 of the 30S subunit (bridge B1b), connecting the 2 subunits; this bridge is implicated in subunit movement. Contacts the P site tRNA; the 5S rRNA and some of its associated proteins might help stabilize positioning of ribosome-bound tRNAs. The chain is Large ribosomal subunit protein uL5 from Streptomyces griseus subsp. griseus (strain JCM 4626 / CBS 651.72 / NBRC 13350 / KCC S-0626 / ISP 5235).